The sequence spans 313 residues: Ribosomal RNA small subunit methyltransferase H (313 aa).

S-adenosyl-L-methionine-binding positions include 35–37 (GGH), Asp55, Phe79, Asp100, and Gln107.

This sequence belongs to the methyltransferase superfamily. RsmH family.

It is found in the cytoplasm. The enzyme catalyses cytidine(1402) in 16S rRNA + S-adenosyl-L-methionine = N(4)-methylcytidine(1402) in 16S rRNA + S-adenosyl-L-homocysteine + H(+). Its function is as follows. Specifically methylates the N4 position of cytidine in position 1402 (C1402) of 16S rRNA. This Burkholderia ambifaria (strain ATCC BAA-244 / DSM 16087 / CCUG 44356 / LMG 19182 / AMMD) (Burkholderia cepacia (strain AMMD)) protein is Ribosomal RNA small subunit methyltransferase H.